We begin with the raw amino-acid sequence, 1037 residues long: Ras guanine nucleotide exchange factor E (1037 aa).

The stretch at 5 to 35 (ECNNRIEYLQNKVLELESLNENLKGQLEYFQ) forms a coiled coil. Disordered regions lie at residues 65–100 (NNNN…TTNN), 114–150 (TNSN…ELSN), 166–387 (TTTT…PLSN), 414–437 (TVNM…LYHS), 451–472 (SSLS…LTNP), 602–628 (INSN…NQLE), 907–935 (NTTT…QQLN), and 1004–1037 (EKET…SFKS). 2 stretches are compositionally biased toward low complexity: residues 114–145 (TNSN…NNSN) and 166–200 (TTTT…NNNN). The span at 229–239 (PTSSRNSPTNK) shows a compositional bias: polar residues. Low complexity predominate over residues 240 to 276 (SSPQFLSPLSKSPLSQSTQSTTVSSPSPSWTTTVPQS). Over residues 282–300 (TIVQSKSPYSPDTNISNKL) the composition is skewed to polar residues. A compositionally biased stretch (low complexity) spans 318–360 (SPSKNSPRSLNSNNNNSSATTSITTPPTTSTPTPTTSTTTTTT). The span at 361-370 (TERRPEDRRS) shows a compositional bias: basic and acidic residues. Composition is skewed to polar residues over residues 372 to 387 (TSPF…PLSN) and 424 to 437 (PRSN…LYHS). In terms of domain architecture, N-terminal Ras-GEF spans 496–694 (NGFIVKGGTI…NLKRLLTNDR (199 aa)). The 278-residue stretch at 726–1003 (DPTEIARQLT…YKLSLICEPK (278 aa)) folds into the Ras-GEF domain. Residues 907 to 930 (NTTTTTTTTTTTTTTNTTTSNNNN) are compositionally biased toward low complexity. Over residues 1027–1037 (SVTSLLNSFKS) the composition is skewed to polar residues.

Its function is as follows. Promotes the exchange of Ras-bound GDP by GTP. Seems to play a role in chemotaxis. The polypeptide is Ras guanine nucleotide exchange factor E (gefE) (Dictyostelium discoideum (Social amoeba)).